The following is a 211-amino-acid chain: Large ribosomal subunit protein bL25 (211 aa).

The protein belongs to the bacterial ribosomal protein bL25 family. CTC subfamily. In terms of assembly, part of the 50S ribosomal subunit; part of the 5S rRNA/L5/L18/L25 subcomplex. Contacts the 5S rRNA. Binds to the 5S rRNA independently of L5 and L18.

This is one of the proteins that binds to the 5S RNA in the ribosome where it forms part of the central protuberance. The chain is Large ribosomal subunit protein bL25 from Anaplasma phagocytophilum (strain HZ).